A 232-amino-acid polypeptide reads, in one-letter code: Phosphatidylserine decarboxylase proenzyme (232 aa).

The active-site Schiff-base intermediate with substrate; via pyruvic acid is Ser-190. A Pyruvic acid (Ser); by autocatalysis modification is found at Ser-190.

Belongs to the phosphatidylserine decarboxylase family. PSD-A subfamily. In terms of assembly, heterodimer of a large membrane-associated beta subunit and a small pyruvoyl-containing alpha subunit. The cofactor is pyruvate. Is synthesized initially as an inactive proenzyme. Formation of the active enzyme involves a self-maturation process in which the active site pyruvoyl group is generated from an internal serine residue via an autocatalytic post-translational modification. Two non-identical subunits are generated from the proenzyme in this reaction, and the pyruvate is formed at the N-terminus of the alpha chain, which is derived from the carboxyl end of the proenzyme. The post-translation cleavage follows an unusual pathway, termed non-hydrolytic serinolysis, in which the side chain hydroxyl group of the serine supplies its oxygen atom to form the C-terminus of the beta chain, while the remainder of the serine residue undergoes an oxidative deamination to produce ammonia and the pyruvoyl prosthetic group on the alpha chain.

Its subcellular location is the cell membrane. It catalyses the reaction a 1,2-diacyl-sn-glycero-3-phospho-L-serine + H(+) = a 1,2-diacyl-sn-glycero-3-phosphoethanolamine + CO2. It participates in phospholipid metabolism; phosphatidylethanolamine biosynthesis; phosphatidylethanolamine from CDP-diacylglycerol: step 2/2. In terms of biological role, catalyzes the formation of phosphatidylethanolamine (PtdEtn) from phosphatidylserine (PtdSer). The polypeptide is Phosphatidylserine decarboxylase proenzyme (Brucella canis (strain ATCC 23365 / NCTC 10854 / RM-666)).